Reading from the N-terminus, the 426-residue chain is Serine--tRNA ligase (426 aa).

Residue 231–233 coordinates L-serine; sequence TSE. Position 262–264 (262–264) interacts with ATP; that stretch reads RSE. Residue E285 coordinates L-serine. An ATP-binding site is contributed by 349–352; sequence EISS. L-serine is bound at residue S385.

It belongs to the class-II aminoacyl-tRNA synthetase family. Type-1 seryl-tRNA synthetase subfamily. As to quaternary structure, homodimer. The tRNA molecule binds across the dimer.

The protein resides in the cytoplasm. It carries out the reaction tRNA(Ser) + L-serine + ATP = L-seryl-tRNA(Ser) + AMP + diphosphate + H(+). It catalyses the reaction tRNA(Sec) + L-serine + ATP = L-seryl-tRNA(Sec) + AMP + diphosphate + H(+). It participates in aminoacyl-tRNA biosynthesis; selenocysteinyl-tRNA(Sec) biosynthesis; L-seryl-tRNA(Sec) from L-serine and tRNA(Sec): step 1/1. Its function is as follows. Catalyzes the attachment of serine to tRNA(Ser). Is also able to aminoacylate tRNA(Sec) with serine, to form the misacylated tRNA L-seryl-tRNA(Sec), which will be further converted into selenocysteinyl-tRNA(Sec). The protein is Serine--tRNA ligase of Legionella pneumophila (strain Lens).